The sequence spans 344 residues: L-rhamnose-proton symporter (344 aa).

10 helical membrane-spanning segments follow: residues 4 to 24, 38 to 58, 74 to 94, 101 to 121, 137 to 157, 175 to 195, 214 to 234, 259 to 279, 290 to 310, and 323 to 343; these read AITM…CFYA, WSVG…ALLL, LPVF…GLTM, MGIG…TPII, TLLG…AGQL, LVLA…MNAA, LPSY…FCFI, VLLS…YAWG, ISWM…GLVL, and VLSL…IGMA.

This sequence belongs to the L-rhamnose transporter (TC 2.A.7.6) family.

It localises to the cell inner membrane. It carries out the reaction L-rhamnopyranose(in) + H(+)(in) = L-rhamnopyranose(out) + H(+)(out). Functionally, uptake of L-rhamnose across the cytoplasmic membrane with the concomitant transport of protons into the cell (symport system). The protein is L-rhamnose-proton symporter of Escherichia coli (strain K12 / MC4100 / BW2952).